The primary structure comprises 95 residues: Selenoprotein K (95 aa).

The helical transmembrane segment at 20-42 (LSFLTDMFWGITDFIVMFFQSII) threads the bilayer. The interval 48–95 (RRGCQNSSSRTRFDDGRGPPGNPRRRMGRIDHNSGPNAPPMSGGGUGR) is disordered. Sec-93 is a non-standard amino acid (selenocysteine).

Belongs to the selenoprotein K family.

Its subcellular location is the endoplasmic reticulum membrane. It is found in the cell membrane. In terms of biological role, required for Ca(2+) flux in immune cells and plays a role in T-cell proliferation and in T-cell and neutrophil migration. Involved in endoplasmic reticulum-associated degradation (ERAD) of soluble glycosylated proteins. Required for cell surface expression of CD36 and involved in macrophage uptake of low-density lipoprotein and in foam cell formation. Required for palmitoylation. The sequence is that of Selenoprotein K (selenok) from Xenopus tropicalis (Western clawed frog).